Here is a 494-residue protein sequence, read N- to C-terminus: One cut domain family member 3 (494 aa).

Disordered regions lie at residues 130-162 (AAAVAGAHGGHPHAHPHPAAAPPPPPPPQRLAA), 199-239 (LSPL…GDKL), and 295-319 (AHGPHGGGGGPGGSGGGPSAGAAAE). Composition is skewed to pro residues over residues 148-158 (AAAPPPPPPPQ) and 214-225 (PQPPPPPPPPPL). Over residues 297–313 (GPHGGGGGPGGSGGGPS) the composition is skewed to gly residues. Residues 312–398 (PSAGAAAEEI…QRMSALRLAA (87 aa)) constitute a DNA-binding region (CUT). Positions 414–473 (PKKQRLVFTDLQRRTLIAIFKENKRPSKEMQVTISQQLGLELNTVSNFFMNARRRCMNRW) form a DNA-binding region, homeobox. Residues 475–494 (EEPSTAPGGPAGATATFSKA) are disordered. A compositionally biased stretch (low complexity) spans 476–494 (EPSTAPGGPAGATATFSKA).

This sequence belongs to the CUT homeobox family.

The protein resides in the nucleus. Its function is as follows. Transcriptional activator. Binds the consensus DNA sequence 5'-DHWATTGAYTWWD-3' on a variety of gene promoters such as those of HNF3B and TTR. In Homo sapiens (Human), this protein is One cut domain family member 3 (ONECUT3).